The chain runs to 635 residues: MSIILAKKSGFCYGVKRAVDTCLKIKQNYPDKIIYTLGPLIHNNDVVDFLKTKNIFSIGYENIDTLKEGDIIILRSHGVTLETIQKLKEKKLNIIDATCPYVSNIQKKAQKYYKEGYSILIVGDKNHPEVIGINGWCNNSAIICRKAEEIEDLPKKICVVSQTTEKKEHWISVLSKVVNECREVVAFNTICNATEVRQLSAEDLSKEVDFMIVIGSKSSSNTTKLYEICKNNCSNTIHIENAGELPDYISNKYSKIGVTAGASTPDWIIKEAIFKMSNKNLNEQLEYMENNDIQISIGQEVEGEIVSIVSSNEAYVNIGYKSDAILLLSEVTKDNDEDINNFVKKGDIIKGKIIKLGSENKPPVISVIELNRENAYVELKEAFENKEKVVVKVKEDVNGGLISIYKNIVRVFIPASHVELRHVDDLSIYKGCELTVNIIEFEEGRNNTRIVASRRDLLKEEQSKVEEETWSSLEKDTIKEGEVRRLTDFGAFVNINGVDGLLHVSEISWGRVEKPSDMLKVGDKIKVYIKDIDKDKKKLALSIKDLTKDPWKDVEVKYPVGNIVLGTVVRFASFGAFVELEPGVDGLIHISQISHKRVDRVEDELSIGEQVKAKIVEVDGEKRKIGLSIKEVNDI.

The interval Met-1–Lys-279 is 4-hydroxy-3-methylbut-2-enyl diphosphate reductase. A [4Fe-4S] cluster-binding site is contributed by Cys-12. 2 residues coordinate (2E)-4-hydroxy-3-methylbut-2-enyl diphosphate: His-42 and His-77. Dimethylallyl diphosphate is bound by residues His-42 and His-77. Positions 42 and 77 each coordinate isopentenyl diphosphate. Cys-99 provides a ligand contact to [4Fe-4S] cluster. Residue His-127 participates in (2E)-4-hydroxy-3-methylbut-2-enyl diphosphate binding. His-127 lines the dimethylallyl diphosphate pocket. Residue His-127 participates in isopentenyl diphosphate binding. Catalysis depends on Glu-129, which acts as the Proton donor. (2E)-4-hydroxy-3-methylbut-2-enyl diphosphate is bound at residue Thr-163. Cys-191 serves as a coordination point for [4Fe-4S] cluster. Residues Ser-219, Ser-220, Asn-221, and Ser-263 each coordinate (2E)-4-hydroxy-3-methylbut-2-enyl diphosphate. Positions 219, 220, 221, and 263 each coordinate dimethylallyl diphosphate. Isopentenyl diphosphate is bound by residues Ser-219, Ser-220, Asn-221, and Ser-263. S1 motif domains lie at Gly-298–Glu-373, Lys-380–Arg-455, Asp-476–Lys-544, and Gly-561–Lys-630.

This sequence in the N-terminal section; belongs to the IspH family. Requires [4Fe-4S] cluster as cofactor.

It catalyses the reaction isopentenyl diphosphate + 2 oxidized [2Fe-2S]-[ferredoxin] + H2O = (2E)-4-hydroxy-3-methylbut-2-enyl diphosphate + 2 reduced [2Fe-2S]-[ferredoxin] + 2 H(+). The catalysed reaction is dimethylallyl diphosphate + 2 oxidized [2Fe-2S]-[ferredoxin] + H2O = (2E)-4-hydroxy-3-methylbut-2-enyl diphosphate + 2 reduced [2Fe-2S]-[ferredoxin] + 2 H(+). It functions in the pathway isoprenoid biosynthesis; dimethylallyl diphosphate biosynthesis; dimethylallyl diphosphate from (2E)-4-hydroxy-3-methylbutenyl diphosphate: step 1/1. Its pathway is isoprenoid biosynthesis; isopentenyl diphosphate biosynthesis via DXP pathway; isopentenyl diphosphate from 1-deoxy-D-xylulose 5-phosphate: step 6/6. Catalyzes the conversion of 1-hydroxy-2-methyl-2-(E)-butenyl 4-diphosphate (HMBPP) into a mixture of isopentenyl diphosphate (IPP) and dimethylallyl diphosphate (DMAPP). Acts in the terminal step of the DOXP/MEP pathway for isoprenoid precursor biosynthesis. The protein is 4-hydroxy-3-methylbut-2-enyl diphosphate reductase of Clostridium tetani (strain Massachusetts / E88).